We begin with the raw amino-acid sequence, 937 residues long: Protein translocase subunit SecA (937 aa).

Residues glutamine 90, 108 to 112 (GEGKT), and aspartate 509 each bind ATP.

Belongs to the SecA family. As to quaternary structure, monomer and homodimer. Part of the essential Sec protein translocation apparatus which comprises SecA, SecYEG and auxiliary proteins SecDF. Other proteins may also be involved.

The protein resides in the cell inner membrane. It localises to the cellular thylakoid membrane. Its subcellular location is the cytoplasm. The enzyme catalyses ATP + H2O + cellular proteinSide 1 = ADP + phosphate + cellular proteinSide 2.. Its function is as follows. Part of the Sec protein translocase complex. Interacts with the SecYEG preprotein conducting channel. Has a central role in coupling the hydrolysis of ATP to the transfer of proteins into and across the cell membrane, serving as an ATP-driven molecular motor driving the stepwise translocation of polypeptide chains across the membrane. In terms of biological role, probably participates in protein translocation into and across both the cytoplasmic and thylakoid membranes in cyanobacterial cells. In Parasynechococcus marenigrum (strain WH8102), this protein is Protein translocase subunit SecA.